Here is a 117-residue protein sequence, read N- to C-terminus: Protein RALF-like 32 (117 aa).

The signal sequence occupies residues 1–26; sequence MEIKPSRIFSTITIFFLCLLLAHVTS. A propeptide spans 27 to 64 (removed in mature form); that stretch reads KASSSSLCNGSVAECSSMVETEEMSVIMESWSSQRLTE. The N-linked (GlcNAc...) asparagine glycan is linked to asparagine 35. The tract at residues 77–107 is disordered; sequence RNQPACDGGKRGESYSTQCLPPPSNPYSRGC. Intrachain disulfides connect cysteine 82/cysteine 95 and cysteine 107/cysteine 113.

Belongs to the plant rapid alkalinization factor (RALF) family. Proteolytically cleaved, probably by S1P, a subtilisin-like serine protease (subtilase).

The protein resides in the secreted. Functionally, cell signaling peptide that may regulate plant stress, growth, and development. Mediates a rapid alkalinization of extracellular space by mediating a transient increase in the cytoplasmic Ca(2+) concentration leading to a calcium-dependent signaling events through a cell surface receptor and a concomitant activation of some intracellular mitogen-activated protein kinases. This is Protein RALF-like 32 (RALFL32) from Arabidopsis thaliana (Mouse-ear cress).